We begin with the raw amino-acid sequence, 468 residues long: H(+)/Cl(-) exchange transporter ClcA (468 aa).

Topologically, residues 1 to 32 (MIKRERIVKSVLAHVPKDAINQFVSRGSTPTS) are cytoplasmic. Residues 33–69 (FSVLFMAAIVGTLAGLVGTYFEIAVHFVSETRTEWLK) traverse the membrane as a helical segment. Residues 70–76 (SEIGSVL) lie on the Periplasmic side of the membrane. A helical membrane pass occupies residues 77-100 (PLWLAAILISGALAFIGYYLVNRF). A Selectivity filter part_1 motif is present at residues 106 to 110 (GSGIP). S107 contributes to the chloride binding site. Residues 109-116 (IPEIEGAM) constitute an intramembrane region (helical). Residues 117 to 123 (DNIRSVR) are Cytoplasmic-facing. A run of 2 helical transmembrane segments spans residues 124 to 141 (WWRV…ALGS) and 148 to 166 (EGPT…TDIF). The short motif at 146–150 (GREGP) is the Selectivity filter part_2 element. Residues 167 to 176 (RVKDDDTRHS) are Cytoplasmic-facing. 2 consecutive intramembrane regions (helical) follow at residues 177–189 (LLAS…LAAA) and 193–201 (PLAAIMFVV). Residues 202–214 (EEMRPQFRYSLIS) lie on the Cytoplasmic side of the membrane. Residues 215 to 232 (IRAVIISAIMANIVFRAI) form a helical membrane-spanning segment. Residues 233–252 (NGQEAVITMPQYQSPELQSL) lie on the Periplasmic side of the membrane. The chain crosses the membrane as a helical span at residues 253 to 281 (WLFLLLGSLFGVFGVVFNKLITIAQDSFV). At 282–287 (ALHKND) the chain is on the cytoplasmic side. Residues 288-309 (RKRYLITGTILGGVFGLLLLYV) traverse the membrane as a helical segment. At 310–329 (PQLTGGGIGLIPDITNGNYS) the chain is on the periplasmic side. 2 helical membrane-spanning segments follow: residues 330–349 (ISIL…LCFG) and 355–376 (GIFA…ASAD). The short motif at 355–359 (GIFAP) is the Selectivity filter part_3 element. Residues I356 and F357 each coordinate chloride. At 377-386 (MLLPSLTIEP) the chain is on the periplasmic side. Residues 387 to 401 (GVFAIAGMGALFAAT) constitute an intramembrane region (helical). Positions 402-404 (VRA) form an intramembrane region, note=Loop between two helices. The helical intramembrane region spans 405–416 (PITGILLVIEMT). The note=Loop between two helices intramembrane region spans 417–421 (NNYYL). Residues 422 to 438 (ILPLIITSLGAVIVAQL) form a helical membrane-spanning segment. Residues 439–468 (LGGQPIYSQLLHRTLKNDKLRQQDLPENQA) are Cytoplasmic-facing. Position 445 (Y445) interacts with chloride.

The protein belongs to the chloride channel (TC 2.A.49) family. ClcA subfamily. Homodimer.

Its subcellular location is the cell inner membrane. It carries out the reaction 2 chloride(in) + H(+)(out) = 2 chloride(out) + H(+)(in). Its function is as follows. Proton-coupled chloride transporter. Functions as antiport system and exchanges two chloride ions for 1 proton. Probably acts as an electrical shunt for an outwardly-directed proton pump that is linked to amino acid decarboxylation, as part of the extreme acid resistance (XAR) response. The protein is H(+)/Cl(-) exchange transporter ClcA of Vibrio campbellii (strain ATCC BAA-1116).